The primary structure comprises 87 residues: Small ribosomal subunit protein bS20 (87 aa).

A disordered region spans residues 1-25; it reads MANSAQARKRARQNISHRNRNMSLR. Positions 7–20 are enriched in basic residues; it reads ARKRARQNISHRNR.

This sequence belongs to the bacterial ribosomal protein bS20 family.

Its function is as follows. Binds directly to 16S ribosomal RNA. This chain is Small ribosomal subunit protein bS20, found in Nitrosospira multiformis (strain ATCC 25196 / NCIMB 11849 / C 71).